The following is a 274-amino-acid chain: MAIHLYKTSTPSTRNGAVDSQVKSNPRNNLIYGQHHCGKGRNARGIITVRHRGGGHKRLYRKIDFRRNAKDIYGRIVTIEYDPNRNAYICLIHYGDGEKRYILHPRGAIIGDTIVSGTEVPIKMGNALPLTDMPLGTAIHNIEITLGKGGQLARAAGAVAKLIAKEGKSATLKLPSGEVRLISKNCSATVGQVGNVGVNQKSLGRAGSKCWLGKRPVVRGVVMNPVDHPHGGGEGRAPIGRKKPVTPWGYPALGRRTRKRKKYSETLILRRRSK.

Disordered regions lie at residues 1–22 (MAIHLYKTSTPSTRNGAVDSQV) and 225–274 (PVDH…RRSK).

This sequence belongs to the universal ribosomal protein uL2 family. As to quaternary structure, part of the 50S ribosomal subunit.

Its subcellular location is the plastid. The protein resides in the chloroplast. This chain is Large ribosomal subunit protein uL2cz/uL2cy (rpl2-A), found in Arabis hirsuta (Hairy rock-cress).